A 361-amino-acid polypeptide reads, in one-letter code: Chorismate synthase (361 aa).

Residues Arg-48 and Arg-54 each contribute to the NADP(+) site. Residues 125-127 (RSS), 238-239 (NA), Gly-278, 293-297 (KPTSS), and Arg-319 contribute to the FMN site.

The protein belongs to the chorismate synthase family. Homotetramer. The cofactor is FMNH2.

The enzyme catalyses 5-O-(1-carboxyvinyl)-3-phosphoshikimate = chorismate + phosphate. It participates in metabolic intermediate biosynthesis; chorismate biosynthesis; chorismate from D-erythrose 4-phosphate and phosphoenolpyruvate: step 7/7. Its function is as follows. Catalyzes the anti-1,4-elimination of the C-3 phosphate and the C-6 proR hydrogen from 5-enolpyruvylshikimate-3-phosphate (EPSP) to yield chorismate, which is the branch point compound that serves as the starting substrate for the three terminal pathways of aromatic amino acid biosynthesis. This reaction introduces a second double bond into the aromatic ring system. This chain is Chorismate synthase, found in Pectobacterium atrosepticum (strain SCRI 1043 / ATCC BAA-672) (Erwinia carotovora subsp. atroseptica).